The chain runs to 554 residues: Laccase-8 (554 aa).

The N-terminal stretch at 1 to 21 (MASAAMLVPLVLVLCTAAASA) is a signal peptide. 2 Plastocyanin-like domains span residues 29–145 (KVGG…PRNG) and 156–309 (EEIP…YKGV). The Cu cation site is built by H79 and H81. N-linked (GlcNAc...) asparagine glycosylation is found at N107 and N113. Cu cation-binding residues include H124 and H126. N-linked (GlcNAc...) asparagine glycans are attached at residues N271 and N369. The Plastocyanin-like 3 domain occupies 411-537 (DFPDFPPPMQ…AMVFEVLNGP (127 aa)). Residues H455, H458, H460, H516, C517, H518, and H522 each coordinate Cu cation.

The protein belongs to the multicopper oxidase family. It depends on Cu cation as a cofactor.

The protein localises to the secreted. It localises to the extracellular space. It is found in the apoplast. The enzyme catalyses 4 hydroquinone + O2 = 4 benzosemiquinone + 2 H2O. Lignin degradation and detoxification of lignin-derived products. The polypeptide is Laccase-8 (LAC8) (Oryza sativa subsp. japonica (Rice)).